A 223-amino-acid chain; its full sequence is MKTVSTAVVLAAAAVSLTGCATESSRSLEVEKVASYNTQYHGVRTPISVGTFDNRSSFQKGIFSDGEDRLGSQAKTILVTHLQQTNRFNVLNRTNLNALKQESGISGKAHNLKGADYVVTGDVTEFGRRDVGDHQLFGILGRGKSQIAYAKVALNIVNVNTSEIVYSAQGAGEYALSNREIIGFGGTSGYDATLNGKVLDLAIREAVNSLVQAVDNGAWQPNR.

The signal sequence occupies residues 1 to 19 (MKTVSTAVVLAAAAVSLTG). C20 carries N-palmitoyl cysteine lipidation. The S-diacylglycerol cysteine moiety is linked to residue C20.

It is found in the cell membrane. In Neisseria meningitidis serogroup B (strain ATCC BAA-335 / MC58), this protein is Putative lipoprotein NMB1126/NMB1164.